Reading from the N-terminus, the 663-residue chain is MNWLSSSSGVVLTAYHPSGKDQVAGDSHVKGGDEATSSRRYGQYTINQEGSTKVPERPPFDRSSSQDSLDESMEAYWTELENIKRSNENRQEGQEAIVVKEPDEGELEEEWLKEAGLSNLFGESIDDPQESILFLSTLTRTQAAAVQKRVETVSQTLRKKNKQHHIRDVRDIFAQQREAQEKPPDDSDLRSVRTNENKGQGKDDQPSSGAVDSKEQISRVPEDTPASETDINLEVSFAEQAVNQKEFSKERTQKISSNDSLPSFRLPKDKTGTTRIGDLAPQDMKKVCSLSLIELTALYDVLGLEFKQQKAVKIKTRDSGLFGIPLTILLEQDQRKVPGTRIPLIFQKLISRIEEGSLETEGLLRIPGAAMRIKNLCQELEAKFYEGTFNWESVKQHDAASLLKLFLRELPQPLLSMEYLKAFQAVQNLPTRKEQLQALNLLVILLPDANRDTLKALLEFLQRVIDNKEKNKMTAGNVAMVMAPNLFMCHTLGLKSSEQREFEMAAGTANVMHLLIRYQKILWTIPKFIVIQVRKQNIENQKKERKAMKKLLKKMAYDREKHEKQDKTANGADVPQGVIRVQAPHLSKVSMAIQLTEELKASDVLARFLSQESGVAQTLKKGEVFLYEIGGNIGERCLDDDTHMKDLYQLNPNAEWVIKSKPV.

2 disordered regions span residues 14–73 (AYHP…DESM) and 85–106 (RSNE…DEGE). Over residues 27–37 (SHVKGGDEATS) the composition is skewed to basic and acidic residues. Over residues 38 to 51 (SRRYGQYTINQEGS) the composition is skewed to polar residues. Phosphoserine is present on residues Ser-65 and Ser-68. Basic and acidic residues predominate over residues 85 to 102 (RSNENRQEGQEAIVVKEP). The residue at position 156 (Thr-156) is a Phosphothreonine. Disordered stretches follow at residues 173 to 228 (FAQQ…PASE) and 245 to 277 (KEFS…TRIG). 2 stretches are compositionally biased toward basic and acidic residues: residues 178–205 (EAQE…KDDQ) and 212–222 (DSKEQISRVPE). 2 positions are modified to phosphoserine: Ser-260 and Ser-263. The 200-residue stretch at 324-523 (IPLTILLEQD…LLIRYQKILW (200 aa)) folds into the Rho-GAP domain. Ser-610 is modified (phosphoserine).

In terms of assembly, interacts with MPHOSPH6. As to expression, widely expressed: expressed in most organs, except small intestine.

The protein resides in the cytoplasm. Functionally, rho GTPase activating protein that suppresses F-actin polymerization by inhibiting Rho. Rho GTPase activating proteins act by converting Rho-type GTPases to an inactive GDP-bound state. Plays a key role in tissue tension and 3D tissue shape by regulating cortical actomyosin network formation. Acts downstream of YAP1 and inhibits actin polymerization, which in turn reduces nuclear localization of YAP1. Regulates cell shape, spreading, and migration. This chain is Rho GTPase-activating protein 18, found in Mus musculus (Mouse).